Reading from the N-terminus, the 317-residue chain is UV DNA damage endonuclease (317 aa).

It belongs to the uve1/UvsE family.

Component in a DNA repair pathway. Removal of UV LIGHT damaged nucleotides. Recognizes pyrimidine dimers and cleave a phosphodiester bond immediately 5' to the lesion. This chain is UV DNA damage endonuclease, found in Bacillus cereus (strain B4264).